The following is a 505-amino-acid chain: Zinc metalloproteinase/disintegrin (505 aa).

Residues 1 to 20 (MIQVLLVIICLAAFPYQGTS) form the signal peptide. The propeptide occupies 21 to 214 (IILESGNVND…PIKKASQSNL (194 aa)). 2 repeat units span residues 153–179 (KYEDVEKEDEAPKMCGVTQNWESYEPI) and 180–206 (KYEDVEKEDEAPKMCGVTQNWESYEPI). In terms of domain architecture, Peptidase M12B spans 220 to 416 (RYIELVIVAD…QKPQCILNKP (197 aa)). Positions 223 and 307 each coordinate Ca(2+). H356 is a Zn(2+) binding site. The active site involves E357. 2 residues coordinate Zn(2+): H360 and H366. Intrachain disulfides connect C371-C395 and C373-C378. Ca(2+) is bound by residues C411 and N414. The propeptide occupies 417-432 (LRTDTVSTPVSGNELL). The 82-residue stretch at 424–505 (TPVSGNELLE…AGCPRNPFHA (82 aa)) folds into the Disintegrin domain. Intrachain disulfides connect C438–C453, C440–C448, C447–C470, C461–C467, C466–C491, and C479–C498. A Cell attachment site motif is present at residues 483-485 (RGD).

It belongs to the venom metalloproteinase (M12B) family. P-II subfamily. P-IIa sub-subfamily. As to quaternary structure, monomer. The cofactor is Zn(2+). In terms of tissue distribution, expressed by the venom gland.

The protein localises to the secreted. Impairs hemostasis in the envenomed animal. Functionally, inhibits platelet aggregation induced by ADP, thrombin, platelet-activating factor and collagen. Acts by inhibiting fibrinogen interaction with platelet receptors GPIIb/GPIIIa (ITGA2B/ITGB3). In Gloydius brevicauda (Korean slamosa snake), this protein is Zinc metalloproteinase/disintegrin.